We begin with the raw amino-acid sequence, 132 residues long: MAKSKKDSGARRKKVTRTVADGIAHVHASFNNTIITITDRQGNALSWATSGGAGFRGSRKSTPFAAQVAAENAGNAAKDYGLKNLEVRVKGPGPGRESSIRALNGCGYKITHIEDVTPIPHNGCRPPKKRRV.

The protein belongs to the universal ribosomal protein uS11 family. Part of the 30S ribosomal subunit. Interacts with proteins S7 and S18. Binds to IF-3.

In terms of biological role, located on the platform of the 30S subunit, it bridges several disparate RNA helices of the 16S rRNA. Forms part of the Shine-Dalgarno cleft in the 70S ribosome. This Alcanivorax borkumensis (strain ATCC 700651 / DSM 11573 / NCIMB 13689 / SK2) protein is Small ribosomal subunit protein uS11.